Here is a 470-residue protein sequence, read N- to C-terminus: Ribulose bisphosphate carboxylase large chain (470 aa).

Residues N118 and T168 each contribute to the substrate site. The active-site Proton acceptor is K170. A substrate-binding site is contributed by K172. K196, D198, and E199 together coordinate Mg(2+). At K196 the chain carries N6-carboxylysine. The active-site Proton acceptor is H289. R290, H322, and S374 together coordinate substrate. Residues 459–465 (EIKFEFD) carry the Interacts with RbcX2 motif.

The protein belongs to the RuBisCO large chain family. Type I subfamily. In terms of assembly, heterohexadecamer of 8 large chains and 8 small chains; disulfide-linked. The disulfide link is formed within the large subunit homodimers. Mg(2+) is required as a cofactor. In terms of processing, the disulfide bond which can form in the large chain dimeric partners within the hexadecamer appears to be associated with oxidative stress and protein turnover.

The protein resides in the carboxysome. The enzyme catalyses 2 (2R)-3-phosphoglycerate + 2 H(+) = D-ribulose 1,5-bisphosphate + CO2 + H2O. The catalysed reaction is D-ribulose 1,5-bisphosphate + O2 = 2-phosphoglycolate + (2R)-3-phosphoglycerate + 2 H(+). In terms of biological role, ruBisCO catalyzes two reactions: the carboxylation of D-ribulose 1,5-bisphosphate, the primary event in carbon dioxide fixation, as well as the oxidative fragmentation of the pentose substrate in the photorespiration process. Both reactions occur simultaneously and in competition at the same active site. The protein is Ribulose bisphosphate carboxylase large chain of Picosynechococcus sp. (strain ATCC 27264 / PCC 7002 / PR-6) (Agmenellum quadruplicatum).